Consider the following 238-residue polypeptide: Sugar fermentation stimulation protein homolog (238 aa).

It belongs to the SfsA family.

The protein is Sugar fermentation stimulation protein homolog of Alkalilimnicola ehrlichii (strain ATCC BAA-1101 / DSM 17681 / MLHE-1).